A 679-amino-acid polypeptide reads, in one-letter code: Oxidant-induced cell-cycle arrest protein 5 (679 aa).

Positions 50–441 (GVPPQLRHVV…RVWDLLLGWR (392 aa)) constitute a Rab-GAP TBC domain. A compositionally biased stretch (low complexity) spans 135–153 (NPAGSSSNANTTNIATPTP). Disordered regions lie at residues 135-159 (NPAG…SSDA), 250-271 (TNNG…NNTN), and 524-544 (QSKA…NDKS). Polar residues predominate over residues 524–539 (QSKAQKDNTVPSPGSD).

This sequence belongs to the OCA5 family.

The protein localises to the cytoplasm. Its function is as follows. Required for replication of brome mosaic virus (BMV), a positive-strand RNA virus. In Saccharomyces cerevisiae (strain RM11-1a) (Baker's yeast), this protein is Oxidant-induced cell-cycle arrest protein 5 (OCA5).